Reading from the N-terminus, the 64-residue chain is Alpha-conotoxin-like Ac1.1a (64 aa).

The first 21 residues, 1–21, serve as a signal peptide directing secretion; it reads MGMRMMFTLFLLVVLTTTVVS. Positions 22 to 47 are excised as a propeptide; sequence YPSDSASDGRDDEAKDERSDMYELKR. 2 cysteine pairs are disulfide-bonded: Cys51–Cys56 and Cys52–Cys62. Cys62 bears the Cysteine amide mark.

It belongs to the conotoxin A superfamily. Expressed by the venom duct.

It is found in the secreted. Its function is as follows. Alpha-conotoxins act on postsynaptic membranes, they bind to the nicotinic acetylcholine receptors (nAChR) and thus inhibit them. The polypeptide is Alpha-conotoxin-like Ac1.1a (Conus achatinus (Little frog cone)).